Here is a 550-residue protein sequence, read N- to C-terminus: Carboxypeptidase Y homolog A (550 aa).

Residues 1-18 (MKSLVLGLLVGSAIASGP) form the signal peptide. The propeptide occupies 19–131 (LQHVLHAPPD…KLSQYDLRIK (113 aa)). The segment at 20–39 (QHVLHAPPDPEPKPEPEPQV) is disordered. 5 cysteine pairs are disulfide-bonded: C185–C424, C319–C333, C343–C366, C350–C359, and C388–C394. N203 and N216 each carry an N-linked (GlcNAc...) asparagine glycan. Residue S272 is part of the active site. N289 is a glycosylation site (N-linked (GlcNAc...) asparagine). A glycan (N-linked (GlcNAc...) asparagine) is linked at N387. The active site involves D463. N-linked (GlcNAc...) asparagine glycosylation is found at N493 and N514. H525 is a catalytic residue.

The protein belongs to the peptidase S10 family.

The protein localises to the vacuole. It catalyses the reaction Release of a C-terminal amino acid with broad specificity.. Its function is as follows. Vacuolar carboxypeptidase involved in degradation of small peptides. Digests preferentially peptides containing an aliphatic or hydrophobic residue in P1' position, as well as methionine, leucine or phenylalanine in P1 position of ester substrate. In Paracoccidioides brasiliensis (strain Pb18), this protein is Carboxypeptidase Y homolog A (CPYA).